Consider the following 413-residue polypeptide: Gamma-glutamyl phosphate reductase (413 aa).

This sequence belongs to the gamma-glutamyl phosphate reductase family.

It localises to the cytoplasm. The catalysed reaction is L-glutamate 5-semialdehyde + phosphate + NADP(+) = L-glutamyl 5-phosphate + NADPH + H(+). It functions in the pathway amino-acid biosynthesis; L-proline biosynthesis; L-glutamate 5-semialdehyde from L-glutamate: step 2/2. Its function is as follows. Catalyzes the NADPH-dependent reduction of L-glutamate 5-phosphate into L-glutamate 5-semialdehyde and phosphate. The product spontaneously undergoes cyclization to form 1-pyrroline-5-carboxylate. This is Gamma-glutamyl phosphate reductase from Salinispora arenicola (strain CNS-205).